A 538-amino-acid polypeptide reads, in one-letter code: Small ribosomal subunit protein uS3m (538 aa).

The segment at 111–134 (SSEGTEEERNEVRGRGAGKRVESI) is disordered. Residues 120 to 134 (NEVRGRGAGKRVESI) show a composition bias toward basic and acidic residues.

Belongs to the universal ribosomal protein uS3 family.

The protein localises to the mitochondrion. In Oryza sativa subsp. japonica (Rice), this protein is Small ribosomal subunit protein uS3m (RPS3).